We begin with the raw amino-acid sequence, 519 residues long: Putative lipase ATG15 (519 aa).

The Cytoplasmic portion of the chain corresponds to 1 to 5 (MYIPG). A helical; Signal-anchor for type II membrane protein membrane pass occupies residues 6–26 (PLRLSSYLLPFLSSPSPPAQS). Over 27–519 (SPDTRTISFK…CYKWEFGEWN (493 aa)) the chain is Lumenal. 6 N-linked (GlcNAc...) asparagine glycosylation sites follow: Asn-48, Asn-133, Asn-196, Asn-220, Asn-302, and Asn-309. The active-site Charge relay system is the Ser-318. A glycan (N-linked (GlcNAc...) asparagine) is linked at Asn-361. Residues 481–502 (RRGPKRQPGGEDPKHGGVPKPV) form a disordered region.

This sequence belongs to the AB hydrolase superfamily. Lipase family. In terms of assembly, binds to both phosphatidylinositol (PI) and phosphatidylinositol 3,5-bisphosphate (PIP2).

The protein resides in the endosome. The protein localises to the multivesicular body membrane. Its subcellular location is the prevacuolar compartment membrane. The enzyme catalyses a triacylglycerol + H2O = a diacylglycerol + a fatty acid + H(+). Its function is as follows. Lipase which is essential for lysis of subvacuolar cytoplasm to vacuole targeted bodies and intravacuolar autophagic bodies. Involved in the lysis of intravacuolar multivesicular body (MVB) vesicles. The intravacuolar membrane disintegration by ATG15 is critical to life span extension. This Cryptococcus neoformans var. neoformans serotype D (strain B-3501A) (Filobasidiella neoformans) protein is Putative lipase ATG15 (ATG15).